A 258-amino-acid polypeptide reads, in one-letter code: Tritrans,polycis-undecaprenyl-diphosphate synthase (geranylgeranyl-diphosphate specific) (258 aa).

Aspartate 37 is a catalytic residue. Aspartate 37 lines the Mg(2+) pocket. Substrate contacts are provided by residues 38 to 41 (GNRR), histidine 54, and 82 to 84 (STE). The active-site Proton acceptor is the asparagine 85. Substrate-binding positions include phenylalanine 86, arginine 88, arginine 207, and 213 to 215 (RIS). Glutamate 226 contacts Mg(2+).

It belongs to the UPP synthase family. As to quaternary structure, homodimer. It depends on Mg(2+) as a cofactor.

It catalyses the reaction geranylgeranyl diphosphate + 7 isopentenyl diphosphate = tri-trans,hepta-cis-undecaprenyl diphosphate + 7 diphosphate. Its function is as follows. Catalyzes the sequential condensation of isopentenyl diphosphate (IPP) with geranylgeranyl diphosphate (GGPP) to yield (2Z,6Z,10Z,14Z,18Z,22Z,26Z,30E,34E,38E)-undecaprenyl diphosphate (tritrans,heptacis-UPP). It is probably the precursor of glycosyl carrier lipids. This chain is Tritrans,polycis-undecaprenyl-diphosphate synthase (geranylgeranyl-diphosphate specific), found in Thermoplasma acidophilum (strain ATCC 25905 / DSM 1728 / JCM 9062 / NBRC 15155 / AMRC-C165).